The sequence spans 1064 residues: MASESETLNPSARIMTFYPTMEEFRNFSRYIAYIESQGAHRAGLAKVVPPKEWKPRASYDDIDDLVIPAPIQQLVTGQSGLFTQYNIQKKAMTVREFRKIANSDKYCTPRYSEFEELERKYWKNLTFNPPIYGADVNGTLYEKHVDEWNIGRLRTILDLVEKESGITIEGVNTPYLYFGMWKTSFAWHTEDMDLYSINYLHFGEPKSWYSVPPEHGKRLERLAKGFFPGSAQSCEAFLRHKMTLISPLMLKKYGIPFDKVTQEAGEFMITFPYGYHAGFNHGFNCAESTNFATRRWIEYGKQAVLCSCRKDMVKISMDVFVRKFQPERYKLWKAGKDNTVIDHTLPTPEAAEFLKESELPPRAGNEEECPEEDMEGVEDGEEGDLKTSLAKHRIGTKRHRVCLEIPQEVSQSELFPKEDLSSEQYEMTECPAALAPVRPTHSSVRQVEDGLTFPDYSDSTEVKFEELKNVKLEEEDEEEEQAAAALDLSVNPASVGGRLVFSGSKKKSSSSLGSGSSRDSISSDSETSEPLSCRAQGQTGVLTVHSYAKGDGRVTVGEPCTRKKGSAARSFSERELAEVADEYMFSLEENKKSKGRRQPLSKLPRHHPLVLQECVSDDETSEQLTPEEEAEETEAWAKPLSQLWQNRPPNFEAEKEFNETMAQQAPHCAVCMIFQTYHQVEFGGFNQNCGNASDLAPQKQRTKPLIPEMCFTSTGCSTDINLSTPYLEEDGTSILVSCKKCSVRVHASCYGVPPAKASEDWMCSRCSANALEEDCCLCSLRGGALQRANDDRWVHVSCAVAILEARFVNIAERSPVDVSKIPLPRFKLKCIFCKKRRKRTAGCCVQCSHGRCPTAFHVSCAQAAGVMMQPDDWPFVVFITCFRHKIPNLERAKGALQSITAGQKVISKHKNGRFYQCEVVRLTTETFYEVNFDDGSFSDNLYPEDIVSQDCLQFGPPAEGEVVQVRWTDGQVYGAKFVASHPIQMYQVEFEDGSQLVVKRDDVYTLDEELPKRVKSRLSVASDMRFNEIFTEKEVKQEKKRQRVINSRYREDYIEPALYRAIME.

A2 is modified (N-acetylalanine). A JmjN domain is found at 14 to 56; it reads IMTFYPTMEEFRNFSRYIAYIESQGAHRAGLAKVVPPKEWKPR. Y132 serves as a coordination point for 2-oxoglutarate. The JmjC domain maps to 142-308; sequence EKHVDEWNIG…YGKQAVLCSC (167 aa). Residues H188 and E190 each coordinate Fe cation. Residues N198 and K206 each coordinate 2-oxoglutarate. Zn(2+)-binding residues include C234 and H240. K241 serves as a coordination point for 2-oxoglutarate. H276 serves as a coordination point for Fe cation. C306 and C308 together coordinate Zn(2+). Positions 358–384 are disordered; the sequence is ELPPRAGNEEECPEEDMEGVEDGEEGD. Residues 366-382 are compositionally biased toward acidic residues; the sequence is EEECPEEDMEGVEDGEE. A (Microbial infection) Glycyl lysine isopeptide (Lys-Gly) (interchain with G-Cter in SUMO) cross-link involves residue K471. Disordered stretches follow at residues 501 to 537 and 616 to 641; these read FSGS…RAQG and SDDE…KPLS. Residues 509–532 show a composition bias toward low complexity; that stretch reads SSSLGSGSSRDSISSDSETSEPLS. Phosphoserine is present on S523. The segment at 597–638 is interaction with NCOR1; sequence RQPLSKLPRHHPLVLQECVSDDETSEQLTPEEEAEETEAWAK. Residues 616–634 show a composition bias toward acidic residues; it reads SDDETSEQLTPEEEAEETE. A PHD-type 1 zinc finger spans residues 709–767; sequence MCFTSTGCSTDINLSTPYLEEDGTSILVSCKKCSVRVHASCYGVPPAKASEDWMCSRCS. The C2HC pre-PHD-type zinc finger occupies 772-805; it reads EEDCCLCSLRGGALQRANDDRWVHVSCAVAILEA. The segment at 828-885 adopts a PHD-type 2 zinc-finger fold; that stretch reads LKCIFCKKRRKRTAGCCVQCSHGRCPTAFHVSCAQAAGVMMQPDDWPFVVFITCFRHK. 2 Tudor domains span residues 897 to 954 and 955 to 1011; these read QSIT…CLQF and GPPA…EELP.

Belongs to the JHDM3 histone demethylase family. In terms of assembly, interacts with histone deacetylase proteins HDAC1, HDAC2 and HDAC3. Interacts with RB and NCOR1. Interacts with VRK1. Interacts with FBXO22; this interaction promotes KDM4A ubiquitination. As to quaternary structure, (Microbial infection) Interacts with HTLV-1 Tax protein. Fe(2+) serves as cofactor. In terms of processing, (Microbial infection) SUMOylated by human herpesvirus 8 E3 SUMO-protein ligase K-bZIP/K8 at Lys-471; thereby modulating the chromatin binding and histone demethylase activity of KDM4A. Post-translationally, ubiquitinated by RNF8 and RNF168 following DNA damage, leading to its degradation. Degradation promotes accessibility of H4K20me2 mark for DNA repair protein TP53BP1, which is then recruited. Also ubiquitinated by the SCF(FBXO22) complex; leading to proteasomal degradation. As to expression, ubiquitous.

It is found in the nucleus. It carries out the reaction N(6),N(6),N(6)-trimethyl-L-lysyl(9)-[histone H3] + 2 2-oxoglutarate + 2 O2 = N(6)-methyl-L-lysyl(9)-[histone H3] + 2 formaldehyde + 2 succinate + 2 CO2. It catalyses the reaction N(6),N(6),N(6)-trimethyl-L-lysyl(36)-[histone H3] + 2 2-oxoglutarate + 2 O2 = N(6)-methyl-L-lysyl(36)-[histone H3] + 2 formaldehyde + 2 succinate + 2 CO2. Several specific inhibitors are being developed and tested. Its function is as follows. Histone demethylase that specifically demethylates 'Lys-9' and 'Lys-36' residues of histone H3, thereby playing a central role in histone code. Does not demethylate histone H3 'Lys-4', H3 'Lys-27' nor H4 'Lys-20'. Demethylates trimethylated H3 'Lys-9' and H3 'Lys-36' residue, while it has no activity on mono- and dimethylated residues. Demethylation of Lys residue generates formaldehyde and succinate. Participates in transcriptional repression of ASCL2 and E2F-responsive promoters via the recruitment of histone deacetylases and NCOR1, respectively. In terms of biological role, crucial for muscle differentiation, promotes transcriptional activation of the Myog gene by directing the removal of repressive chromatin marks at its promoter. Lacks the N-terminal demethylase domain. The protein is Lysine-specific demethylase 4A (KDM4A) of Homo sapiens (Human).